The chain runs to 105 residues: Met repressor (105 aa).

The protein belongs to the MetJ family. Homodimer.

The protein localises to the cytoplasm. Functionally, this regulatory protein, when combined with SAM (S-adenosylmethionine) represses the expression of the methionine regulon and of enzymes involved in SAM synthesis. The sequence is that of Met repressor from Salmonella dublin (strain CT_02021853).